Consider the following 463-residue polypeptide: Adenosylhomocysteinase (463 aa).

Substrate-binding residues include Thr54, Asp129, and Glu189. Residue 190-192 coordinates NAD(+); it reads TTT. The substrate site is built by Lys219 and Asp223. NAD(+)-binding positions include Asn224, 253 to 258, Glu276, Asn311, 332 to 334, and Asn377; these read GYGDVG and IGH.

The protein belongs to the adenosylhomocysteinase family. NAD(+) is required as a cofactor.

The protein resides in the cytoplasm. The catalysed reaction is S-adenosyl-L-homocysteine + H2O = L-homocysteine + adenosine. It participates in amino-acid biosynthesis; L-homocysteine biosynthesis; L-homocysteine from S-adenosyl-L-homocysteine: step 1/1. May play a key role in the regulation of the intracellular concentration of adenosylhomocysteine. The polypeptide is Adenosylhomocysteinase (Caulobacter vibrioides (strain ATCC 19089 / CIP 103742 / CB 15) (Caulobacter crescentus)).